Reading from the N-terminus, the 104-residue chain is Small ribosomal subunit protein uS10 (104 aa).

The protein belongs to the universal ribosomal protein uS10 family. Part of the 30S ribosomal subunit.

Its function is as follows. Involved in the binding of tRNA to the ribosomes. In Dichelobacter nodosus (strain VCS1703A), this protein is Small ribosomal subunit protein uS10.